The sequence spans 89 residues: Small ribosomal subunit protein uS15 (89 aa).

This sequence belongs to the universal ribosomal protein uS15 family. As to quaternary structure, part of the 30S ribosomal subunit. Forms a bridge to the 50S subunit in the 70S ribosome, contacting the 23S rRNA.

Its function is as follows. One of the primary rRNA binding proteins, it binds directly to 16S rRNA where it helps nucleate assembly of the platform of the 30S subunit by binding and bridging several RNA helices of the 16S rRNA. Forms an intersubunit bridge (bridge B4) with the 23S rRNA of the 50S subunit in the ribosome. The sequence is that of Small ribosomal subunit protein uS15 from Anaeromyxobacter dehalogenans (strain 2CP-1 / ATCC BAA-258).